We begin with the raw amino-acid sequence, 320 residues long: Putative fatty acid elongase 3 (320 aa).

An N-linked (GlcNAc...) asparagine glycan is attached at Asn14. 6 helical membrane passes run 33–53 (WMQNHWYQSITASVVYVAVIF), 67–87 (LDTPLFVWNSFLAIFSILGFL), 120–140 (FWTEQFAMSKLFELIDTIFIV), 145–165 (PLIFLHWYHHVTVMIYTWHAY), 203–223 (MAMVVTTLQLAQMVMGVIIGV), and 242–262 (LGLCFGVYFTYFLLFANFFYH).

Belongs to the ELO family.

Its subcellular location is the membrane. It catalyses the reaction a very-long-chain acyl-CoA + malonyl-CoA + H(+) = a very-long-chain 3-oxoacyl-CoA + CO2 + CoA. The protein operates within lipid metabolism; fatty acid biosynthesis. In terms of biological role, could be implicated in synthesis of very long chain fatty acids. May be required for normally rapid growth. This is Putative fatty acid elongase 3 (elo-3) from Caenorhabditis elegans.